A 150-amino-acid chain; its full sequence is UPF0178 protein Bcep1808_1605 (150 aa).

This sequence belongs to the UPF0178 family.

The protein is UPF0178 protein Bcep1808_1605 of Burkholderia vietnamiensis (strain G4 / LMG 22486) (Burkholderia cepacia (strain R1808)).